The primary structure comprises 408 residues: Protein BTN1 (408 aa).

The N-terminal stretch at 1 to 30 (MSDKSHQIYCYFWLFGLINNVLYVVILSAA) is a signal peptide. Helical transmembrane passes span 42-62 (LVLL…PFFI), 80-100 (LGMF…ISFA), 128-148 (SGTG…TSIF), 150-170 (VPVK…LFYF), 238-258 (TVYL…LFPI), 323-343 (WFYV…EGFL), and 369-389 (GAVS…GLGL).

This sequence belongs to the battenin family.

The protein localises to the vacuole membrane. Its function is as follows. Plays a role in vacuolar arginine transport. Involved in pH homeostasis. May be involved in ion homeostasis together with IST2. Not necessary for mitochondrial function or ATP synthase degradation. The polypeptide is Protein BTN1 (YHC3) (Saccharomyces cerevisiae (strain ATCC 204508 / S288c) (Baker's yeast)).